The chain runs to 352 residues: Transcriptional regulatory protein AlgP (352 aa).

The interval 128-352 (KALESRKAKP…SNGAAPTSAS (225 aa)) is disordered. Positions 138–341 (ATKPAAKAAA…SSAASATPAA (204 aa)) are enriched in low complexity.

The promoter for a critical alginate biosynthetic gene, AlgD, encoding GDP-mannose dehydrogenase, is activated only under conditions reminiscent of the cystic fibrosis lung (i.e. under high osmolarity), and at least two regulatory genes, AlgP and AlgQ, have been implicated in this activation process. This chain is Transcriptional regulatory protein AlgP (algP), found in Pseudomonas aeruginosa (strain ATCC 15692 / DSM 22644 / CIP 104116 / JCM 14847 / LMG 12228 / 1C / PRS 101 / PAO1).